Here is a 1748-residue protein sequence, read N- to C-terminus: RANBP2-like and GRIP domain-containing protein 1 (1748 aa).

T14 carries the phosphothreonine modification. 3 TPR repeats span residues P51–Q84, Q575–I608, and E639–W672. The interval G751–E796 is disordered. A compositionally biased stretch (low complexity) spans S769–P788. The 137-residue stretch at H1021–D1157 folds into the RanBD1 1 domain. 2 disordered regions span residues T1198–W1233 and A1291–G1316. Residues I1220–P1229 are compositionally biased toward polar residues. Positions T1302–R1314 are enriched in acidic residues. The region spanning Y1318–K1454 is the RanBD1 2 domain. A compositionally biased stretch (polar residues) spans N1565–E1578. Residues N1565–S1606 are disordered. Residues S1579–V1602 are compositionally biased toward basic and acidic residues. Residues Q1685–V1735 enclose the GRIP domain.

The chain is RANBP2-like and GRIP domain-containing protein 1 (RGPD1) from Homo sapiens (Human).